We begin with the raw amino-acid sequence, 341 residues long: MTDHALLLVNLGSPASTSVADVRRYLNQFLMDPYVIDLPWPVRRLLVSLILIKRPEQSAHAYASIWWDEGSPLVVLSRRLQQQMKAQWTHGPVELAMRYGEPSIETNLLKLVAAGHKRITLAPLYPQFADSTTTTVIEEAKRVVREKKLDVQLSVLQPFYDQPEYLDALVASARPHLQQDYDHLLLSFHGLPERHLTKLDPTGNHCFKNEDCCKNASAAVLATCYRAQCLRTAALFAERMGLPDGKWSVSFQSRLGRAKWIEPYTEARLDELAKSGVKKILVMCPAFVADCIETLEEIGDRGKEQFREAGGEELVLVPCLNDDPQWAKALATLCERAPLAL.

Fe cation is bound by residues H189 and E293.

The protein belongs to the ferrochelatase family.

It localises to the cytoplasm. The enzyme catalyses heme b + 2 H(+) = protoporphyrin IX + Fe(2+). The protein operates within porphyrin-containing compound metabolism; protoheme biosynthesis; protoheme from protoporphyrin-IX: step 1/1. Catalyzes the ferrous insertion into protoporphyrin IX. The protein is Ferrochelatase of Pseudomonas fluorescens (strain Pf0-1).